We begin with the raw amino-acid sequence, 384 residues long: Polar flagellin C (384 aa).

A coiled-coil region spans residues 317 to 347; that stretch reads AKQNRLSHSINNLANIQENVDASNSRIKDTD.

Belongs to the bacterial flagellin family. As to quaternary structure, heteromer of multiple flagellin subunits including FlaA, FlaB/D, FlaC, FlaE and FlaF. Homomer of FlaC is not able to form a functional filament.

It localises to the secreted. The protein resides in the bacterial flagellum. Its function is as follows. Flagellin is the subunit protein which polymerizes to form the filaments of bacterial flagella. FlaC is not essential for polar flagellar synthesis and swimming motility. Homomer of FlaC is not able to form a functional filament. This Vibrio parahaemolyticus serotype O3:K6 (strain RIMD 2210633) protein is Polar flagellin C (flaC).